The chain runs to 57 residues: COP9 signalosome complex subunit 9 (57 aa).

This sequence belongs to the CSN9 family. As to quaternary structure, component of the CSN complex, probably composed of cops1, cops2, cops3, cops4, cops5, cops6, cops7, cops8 and cops9.

It is found in the nucleus. It localises to the cytoplasm. The protein localises to the nucleoplasm. Its function is as follows. Component of the COP9 signalosome complex (CSN), a complex involved in various cellular and developmental processes. The CSN complex is an essential regulator of the ubiquitin (Ubl) conjugation pathway by mediating the deneddylation of the cullin subunits of SCF-type E3 ligase complexes, leading to decrease the Ubl ligase activity. May play a role in cell proliferation. This Xenopus laevis (African clawed frog) protein is COP9 signalosome complex subunit 9.